The chain runs to 517 residues: Glucose-6-phosphate isomerase (517 aa).

Glu345 serves as the catalytic Proton donor. Active-site residues include His376 and Lys490.

Belongs to the GPI family.

Its subcellular location is the cytoplasm. It carries out the reaction alpha-D-glucose 6-phosphate = beta-D-fructose 6-phosphate. The protein operates within carbohydrate biosynthesis; gluconeogenesis. It functions in the pathway carbohydrate degradation; glycolysis; D-glyceraldehyde 3-phosphate and glycerone phosphate from D-glucose: step 2/4. Catalyzes the reversible isomerization of glucose-6-phosphate to fructose-6-phosphate. In Erythrobacter litoralis (strain HTCC2594), this protein is Glucose-6-phosphate isomerase.